The following is a 124-amino-acid chain: Kinocilin (124 aa).

The next 2 helical transmembrane spans lie at leucine 13–valine 33 and methionine 40–leucine 60. Positions proline 80–cysteine 124 are disordered. Positions arginine 90–arginine 109 are enriched in polar residues. Over residues threonine 110–cysteine 124 the composition is skewed to basic and acidic residues.

Its subcellular location is the membrane. Its function is as follows. May play a role in stabilizing dense microtubular networks or in vesicular trafficking. The protein is Kinocilin (KNCN) of Homo sapiens (Human).